Consider the following 392-residue polypeptide: Phosphoglycerate kinase (392 aa).

Residues 21-23, arginine 36, 59-62, arginine 114, and arginine 147 each bind substrate; these read DMN and HLGR. ATP-binding positions include lysine 198, glutamate 320, and 346–349; that span reads GGDT.

This sequence belongs to the phosphoglycerate kinase family. Monomer.

It localises to the cytoplasm. It carries out the reaction (2R)-3-phosphoglycerate + ATP = (2R)-3-phospho-glyceroyl phosphate + ADP. The protein operates within carbohydrate degradation; glycolysis; pyruvate from D-glyceraldehyde 3-phosphate: step 2/5. In Neisseria meningitidis serogroup A / serotype 4A (strain DSM 15465 / Z2491), this protein is Phosphoglycerate kinase.